The primary structure comprises 61 residues: UPF0181 protein Ent638_2380 (61 aa).

This sequence belongs to the UPF0181 family.

The protein is UPF0181 protein Ent638_2380 of Enterobacter sp. (strain 638).